We begin with the raw amino-acid sequence, 436 residues long: Ribosomal protein uS12 methylthiotransferase RimO (436 aa).

Positions 2-114 constitute an MTTase N-terminal domain; sequence PNLYLVSLGC…IDEMILKKQN (113 aa). [4Fe-4S] cluster is bound by residues Cys11, Cys45, Cys77, Cys146, Cys150, and Cys153. The region spanning 132–363 is the Radical SAM core domain; the sequence is TGSSYHAYIK…IKKQIEGSFK (232 aa). The TRAM domain occupies 363–434; that stretch reads KSLVGEVIKV…KDKLIGEIIC (72 aa).

It belongs to the methylthiotransferase family. RimO subfamily. It depends on [4Fe-4S] cluster as a cofactor.

Its subcellular location is the cytoplasm. It catalyses the reaction L-aspartate(89)-[ribosomal protein uS12]-hydrogen + (sulfur carrier)-SH + AH2 + 2 S-adenosyl-L-methionine = 3-methylsulfanyl-L-aspartate(89)-[ribosomal protein uS12]-hydrogen + (sulfur carrier)-H + 5'-deoxyadenosine + L-methionine + A + S-adenosyl-L-homocysteine + 2 H(+). Functionally, catalyzes the methylthiolation of an aspartic acid residue of ribosomal protein uS12. The sequence is that of Ribosomal protein uS12 methylthiotransferase RimO from Campylobacter fetus subsp. fetus (strain 82-40).